Consider the following 145-residue polypeptide: uncharacterized protein (145 aa).

The dksA C4-type zinc finger occupies 86 to 110; sequence CERCGEEIPEPRLCAIPWTRYCAKC.

This is an uncharacterized protein from Aquifex aeolicus (strain VF5).